The sequence spans 415 residues: Mulatexin (415 aa).

A signal peptide spans 1 to 21; sequence MKFRTLLIIFSLVFLLEIVSA. The 44-residue stretch at 23 to 66 folds into the Chitin-binding type-1 1 domain; sequence EPQCGRDAGGALCHGNLCCSHWGFCGTTAIYCDVDQGCQSQCWS. Disulfide bonds link cysteine 26–cysteine 41, cysteine 35–cysteine 47, cysteine 40–cysteine 54, and cysteine 60–cysteine 64. The disordered stretch occupies residues 65-127; that stretch reads WSSPPPPSPP…PGGPERPDHR (63 aa). Over residues 67-121 the composition is skewed to pro residues; sequence SPPPPSPPPPPPSPPPPSPPPPSPPPPSPPPPSPPPPSPPPPSPPPPSPPPPGGP. In terms of domain architecture, Chitin-binding type-1 2 spans 125-167; the sequence is DHRCGRALGNPPCNPGRCCSIHNWCGSTAAYCRGSSCQYQCWN. Cystine bridges form between cysteine 128-cysteine 143, cysteine 137-cysteine 149, cysteine 142-cysteine 156, and cysteine 161-cysteine 165. N-linked (GlcNAc...) asparagine glycosylation occurs at asparagine 264.

Post-translationally, glycosylated.

The protein resides in the secreted. Chitin-binding protein which slows larval growth when consumed by the lepidopteran species S.ricini and M.brassica, but not when consumed by the mulberry specialist B.mori. Lacks chitinase activity. The sequence is that of Mulatexin from Morus alba (White mulberry).